A 204-amino-acid polypeptide reads, in one-letter code: MRYTSAALESLIDEFAKLPGVGRKTAQRLAMYILREPRAEAERLAEALLEAKDNVIRCSVCQNITDVGVDPCALCTSKARDRSVICVVESPVDMLAFEKTGHYKGLYHVLHGVISPLDGIGPDDIKVRELLLRFTMPQSPAVREVVLALNPTIEGETTALYLSKLLKPLGIHVTKIARGIPVGAELEFIDEATLSRAMEGRTVV.

A C4-type zinc finger spans residues 58–75 (CSVCQNITDVGVDPCALC). A Toprim domain is found at 83–181 (SVICVVESPV…HVTKIARGIP (99 aa)).

The protein belongs to the RecR family.

Functionally, may play a role in DNA repair. It seems to be involved in an RecBC-independent recombinational process of DNA repair. It may act with RecF and RecO. In Pelodictyon phaeoclathratiforme (strain DSM 5477 / BU-1), this protein is Recombination protein RecR.